The sequence spans 268 residues: tRNA pseudouridine synthase A (268 aa).

Catalysis depends on D54, which acts as the Nucleophile. Y112 is a binding site for substrate.

It belongs to the tRNA pseudouridine synthase TruA family. As to quaternary structure, homodimer.

It carries out the reaction uridine(38/39/40) in tRNA = pseudouridine(38/39/40) in tRNA. In terms of biological role, formation of pseudouridine at positions 38, 39 and 40 in the anticodon stem and loop of transfer RNAs. The polypeptide is tRNA pseudouridine synthase A (Bordetella petrii (strain ATCC BAA-461 / DSM 12804 / CCUG 43448)).